The sequence spans 147 residues: Nucleoside diphosphate kinase (147 aa).

ATP-binding residues include Lys-9, Phe-57, Arg-85, Thr-91, Arg-102, and Asn-112. The active-site Pros-phosphohistidine intermediate is His-115.

Belongs to the NDK family. Homotetramer. Mg(2+) serves as cofactor.

Its subcellular location is the cytoplasm. The enzyme catalyses a 2'-deoxyribonucleoside 5'-diphosphate + ATP = a 2'-deoxyribonucleoside 5'-triphosphate + ADP. It catalyses the reaction a ribonucleoside 5'-diphosphate + ATP = a ribonucleoside 5'-triphosphate + ADP. Its function is as follows. Major role in the synthesis of nucleoside triphosphates other than ATP. The ATP gamma phosphate is transferred to the NDP beta phosphate via a ping-pong mechanism, using a phosphorylated active-site intermediate. The protein is Nucleoside diphosphate kinase of Thermosipho africanus (strain TCF52B).